The following is a 477-amino-acid chain: Spliceosome-associated protein CWC27 homolog (477 aa).

The PPIase cyclophilin-type domain maps to 11–166; the sequence is SNGKVLLKTT…NPHKIKCTEV (156 aa). Disordered regions lie at residues 203 to 355 and 401 to 477; these read LLSF…AENT and TQAI…KERR. Acidic residues predominate over residues 208–218; the sequence is EEAEEDEEEVN. Composition is skewed to basic and acidic residues over residues 230 to 240 and 247 to 258; these read SSHDLLKDDPR and VEREKDSQSADS. Residues 259-279 are compositionally biased toward acidic residues; sequence DKDEDEMSDDDDEEEDDEMDS. Composition is skewed to basic and acidic residues over residues 280-299, 311-353, and 430-442; these read DEKH…DPSK, EERK…KEAE, and QFEE…KDAN. The stretch at 308 to 381 forms a coiled coil; sequence DEAEERKSSR…EEVRKKNTNK (74 aa).

It belongs to the cyclophilin-type PPIase family. Part of the activated spliceosome B/catalytic step 1 spliceosome, one of the forms of the spliceosome which has a well-formed active site but still cannot catalyze the branching reaction and is composed at least of 52 proteins, the U2, U5 and U6 snRNAs and the pre-mRNA. Recruited during early steps of activated spliceosome B maturation, it is probably one of the first proteins released from this complex as he matures to the spliceosome C complex. Component of the minor spliceosome, which splices U12-type introns.

It is found in the nucleus. In terms of biological role, as part of the spliceosome, plays a role in pre-mRNA splicing. Probable inactive PPIase with no peptidyl-prolyl cis-trans isomerase activity. In Xenopus laevis (African clawed frog), this protein is Spliceosome-associated protein CWC27 homolog (cwc27).